The primary structure comprises 252 residues: MLQIKSIPAFDDNYIWLIQNRDRDCAVVDPGSAEPVLAYLKQHDLNLKAVLITHHHHDHIGGVAELVHQFPEIHVVGPAQEPIPTLTHPVEDGDQIELFDERFMVLGLPGHTLGHIGYVGDGKLFCGDVLFSAGCGRVFEGTMEQMFSSLNKLLSLPEETQVYSAHEYTAANVAFALAVEPENEQLHIYRDEVSRLRAQNQPTLPTTLGREKWVNPFLRTQEPSVIRSVASQVSTLDPLTIFTALREWKNEF.

Zn(2+)-binding residues include His54, His56, Asp58, His59, His111, Asp128, and His166.

This sequence belongs to the metallo-beta-lactamase superfamily. Glyoxalase II family. In terms of assembly, monomer. Zn(2+) serves as cofactor.

The catalysed reaction is an S-(2-hydroxyacyl)glutathione + H2O = a 2-hydroxy carboxylate + glutathione + H(+). It participates in secondary metabolite metabolism; methylglyoxal degradation; (R)-lactate from methylglyoxal: step 2/2. In terms of biological role, thiolesterase that catalyzes the hydrolysis of S-D-lactoyl-glutathione to form glutathione and D-lactic acid. The sequence is that of Hydroxyacylglutathione hydrolase from Vibrio cholerae serotype O1 (strain ATCC 39541 / Classical Ogawa 395 / O395).